Consider the following 241-residue polypeptide: Small ribosomal subunit protein uS3 (241 aa).

The KH type-2 domain maps to 39 to 107; sequence IRKYLEKELK…ETHLNIVEVR (69 aa). The segment at 214-241 is disordered; it reads ASERRATEGDAAHGGGGDRERGRRRENA.

This sequence belongs to the universal ribosomal protein uS3 family. As to quaternary structure, part of the 30S ribosomal subunit. Forms a tight complex with proteins S10 and S14.

In terms of biological role, binds the lower part of the 30S subunit head. Binds mRNA in the 70S ribosome, positioning it for translation. The sequence is that of Small ribosomal subunit protein uS3 from Mesorhizobium japonicum (strain LMG 29417 / CECT 9101 / MAFF 303099) (Mesorhizobium loti (strain MAFF 303099)).